We begin with the raw amino-acid sequence, 901 residues long: MLIPSKLSRPVRLDHTVVRERLLAKLSGANNFRLALITSPAGYGKTTLISQWAAGKNDIGWYSLDEGNNQQERFASYLIAAVQQATNGHCAICETMEQKRQYASLTSLFAQLFIELAEWHSPLYLVIDDYHLITNPVIHESMRFFIRHQPENLTLVVLSRNLPQLGIANLRVRDQLLEIGSQKLAFTHQEAKQFFDCRLSSPIEAAESSRICDDVSGWATALQLIALSARQNTHSAHKSARRLAGINASHLSDYLVDEVLDNVDLATRHFLLKSAILRSMNDALITRVTGEENGQMRLEEIERQGLFLQRMDDTGEWFCYHPLFGNFLRQRCQWELAAELPEIHRAAAESWMAQGFPSEAIHHALAAGDALMLRDILLNHAWSLFNHSELSLLEESLKALPWDSLLENPQLVLLQAWLMQSQHRYGEVNTLLARAEHEIKDIREGTMHAEFNALRAQVAINDGNQDEAERLAKLALEELPPGWFYSRIVATSVLGEVLHCKGELTRSLALVQQTEQMARQHDVWHYALWSLIQQSEILFAQGFLQTAWETQEKAFQLINEQHLEQLPMHEFLVRIRAQLLWTWARLDEAEASARSGIEVLSSYQPQQQLQCLAMLIQCSLARGDLDNARSQLNRLENLLGNGKYHSDWISNANKVRVIYWQMTGDKAAAANWLRHTAKPEFANNHFLQGQWRNIARAQILLGEFEPAEIVLEELNENARSLRLMSDLNRNLLLLNQLYWQAGRKSDAQRVLLDALKLANRTGFISHFVIEGEAMAQQLRQLIQLNTLPELEQHRAQRILREINQHHRHKFAHFDENFVERLLNHPEVPELIRTSPLTQREWQVLGLIYSGYSNEQIAGELEVAATTIKTHIRNLYQKLGVAHRQAAVQHAQKLLKMMGYGV.

39–46 (SPAGYGKT) contributes to the ATP binding site. The HTH luxR-type domain occupies 829 to 894 (ELIRTSPLTQ…AAVQHAQKLL (66 aa)). Positions 853-872 (NEQIAGELEVAATTIKTHIR) form a DNA-binding region, H-T-H motif.

It belongs to the MalT family. As to quaternary structure, monomer in solution. Oligomerizes to an active state in the presence of the positive effectors ATP and maltotriose.

With respect to regulation, activated by ATP and maltotriose, which are both required for DNA binding. Positively regulates the transcription of the maltose regulon whose gene products are responsible for uptake and catabolism of malto-oligosaccharides. Specifically binds to the promoter region of its target genes, recognizing a short DNA motif called the MalT box. The protein is HTH-type transcriptional regulator MalT of Shigella flexneri serotype 5b (strain 8401).